We begin with the raw amino-acid sequence, 167 residues long: Dihydrofolate reductase (167 aa).

A DHFR domain is found at 1-162; sequence MFISMWAQDK…YPHRFQKWQK (162 aa). Residues alanine 7 and 13 to 19 contribute to the NADP(+) site; that span reads LIGKDGL. Aspartate 27 lines the substrate pocket. 45 to 46 is a binding site for NADP(+); sequence KT. Arginine 58 lines the substrate pocket. Residues 64-65 and 99-106 each bind NADP(+); these read TT and GGSRIFQA. Residue threonine 117 coordinates substrate.

It belongs to the dihydrofolate reductase family.

The catalysed reaction is (6S)-5,6,7,8-tetrahydrofolate + NADP(+) = 7,8-dihydrofolate + NADPH + H(+). Its pathway is cofactor biosynthesis; tetrahydrofolate biosynthesis; 5,6,7,8-tetrahydrofolate from 7,8-dihydrofolate: step 1/1. In terms of biological role, key enzyme in folate metabolism. Catalyzes an essential reaction for de novo glycine and purine synthesis, and for DNA precursor synthesis. This is Dihydrofolate reductase (folA) from Enterococcus faecium (Streptococcus faecium).